Reading from the N-terminus, the 625-residue chain is Vacuolar-sorting receptor 7 (625 aa).

The N-terminal stretch at 1–26 (MGLVNGRASLTFLLAALTIIAMVVEA) is a signal peptide. Residues 27 to 564 (RFVVEKESIS…CIERYGSKTA (538 aa)) lie on the Lumenal side of the membrane. The PA domain maps to 58-166 (DYGGFLIGSV…SFGDDLRQGF (109 aa)). Residues N292, N400, and N432 are each glycosylated (N-linked (GlcNAc...) asparagine). EGF-like domains lie at 414–464 (ETNE…TSCT) and 467–513 (GPAR…LTCE). 7 cysteine pairs are disulfide-bonded: C418–C436, C425–C445, C447–C463, C471–C491, C478–C499, C501–C512, and C542–C555. In terms of domain architecture, EGF-like 3; calcium-binding spans 514–556 (DINECKERSVCQCSGCRCKNSWGGYKCSCSGDRLYINDQDTCI). Residues 565–585 (WWLTFLILAIVAVAGLAGYIF) form a helical membrane-spanning segment. Over 586-625 (YKYRFRSYMDSEIMTIMSQYMPLESQRAREVPSEAEPFTL) the chain is Cytoplasmic. The Tyrosine-based internalization motif motif lies at 605-608 (YMPL).

The protein belongs to the VSR (BP-80) family. As to expression, expressed at low levels in seedlings, roots, young leaves, flowers and siliques.

It is found in the golgi apparatus membrane. In terms of biological role, vacuolar-sorting receptor (VSR) involved in clathrin-coated vesicles sorting from Golgi apparatus to vacuoles. This is Vacuolar-sorting receptor 7 (VSR7) from Arabidopsis thaliana (Mouse-ear cress).